Reading from the N-terminus, the 302-residue chain is Gamma-gliadin (302 aa).

The N-terminal stretch at 1 to 19 is a signal peptide; sequence MKTLLILTILAMATTIATA. The interval 27–159 is disordered; the sequence is GQVQWPQQQP…QSFPQQQQPA (133 aa). A compositionally biased stretch (low complexity) spans 42-102; that stretch reads QPFCQQPQRT…PQPQQTFPQQ (61 aa). The segment covering 103–124 has biased composition (pro residues); the sequence is PQLPFPQQPQQPFPQPQQPQQP. The segment covering 125–159 has biased composition (low complexity); sequence FPQSQQPQQPFPQPQQQFPQPQQPQQSFPQQQQPA.

Belongs to the gliadin/glutenin family.

Gliadin is the major seed storage protein in wheat. The chain is Gamma-gliadin from Triticum aestivum (Wheat).